The sequence spans 620 residues: Glutathione-regulated potassium-efflux system protein KefC (620 aa).

Helical transmembrane passes span 4–24 (HTLVQALIYLGSAALIVPIAV), 26–46 (LGLGSVLGYLIAGCIIGPWGL), 54–74 (SILHFAEIGVVLMLFIIGLEL), 90–110 (GALQMVICGGLLGLFCMLLGL), 114–134 (VAELIGMTLALSSTAIAMQAM), 149–169 (FAVLLFQDIAAIPLVAMIPLL), 178–198 (MGAFALSALKVAGALVLVVLL), 218–238 (VFSAVALFLVFGFGLLLEEVG), 270–290 (GLLLGLFFIGVGMSIDFGTLL), 294–314 (LRIVILLLGFLIIKIAMLWLI), 327–347 (WFAVLLGQGSEFAFVVFGAAQ), and 359–379 (SLTLAVALSMAATPILLVILN). The 120-residue stretch at 399 to 518 (QPRVIIAGFG…AGVEKPERET (120 aa)) folds into the RCK N-terminal domain. Residues 597–620 (GWQGTEEGKHTGNMADEPETKPSS) are disordered.

The protein belongs to the monovalent cation:proton antiporter 2 (CPA2) transporter (TC 2.A.37) family. KefC subfamily. As to quaternary structure, homodimer. Interacts with the regulatory subunit KefF.

Its subcellular location is the cell inner membrane. In terms of biological role, pore-forming subunit of a potassium efflux system that confers protection against electrophiles. Catalyzes K(+)/H(+) antiport. This chain is Glutathione-regulated potassium-efflux system protein KefC, found in Escherichia coli O139:H28 (strain E24377A / ETEC).